A 180-amino-acid polypeptide reads, in one-letter code: Inner membrane-spanning protein YciB (180 aa).

Transmembrane regions (helical) follow at residues 4–24, 25–45, 52–72, 76–96, 118–138, and 150–170; these read LLSE…GGGI, QSAT…CYII, LSII…ISGD, IKIK…TSGI, ITLS…NEIV, and FKVF…LPLL.

Belongs to the YciB family.

The protein localises to the cell inner membrane. Its function is as follows. Plays a role in cell envelope biogenesis, maintenance of cell envelope integrity and membrane homeostasis. In Rickettsia bellii (strain RML369-C), this protein is Inner membrane-spanning protein YciB.